Here is a 288-residue protein sequence, read N- to C-terminus: Pyridoxal kinase PdxY (288 aa).

Substrate-binding positions include Ser-12 and 47–48 (TQ). ATP contacts are provided by residues Asp-114, Glu-151, Lys-184, and 211–214 (RPLL). Asp-225 contacts substrate.

It belongs to the pyridoxine kinase family. PdxY subfamily. In terms of assembly, homodimer. Requires Mg(2+) as cofactor.

It catalyses the reaction pyridoxal + ATP = pyridoxal 5'-phosphate + ADP + H(+). The protein operates within cofactor metabolism; pyridoxal 5'-phosphate salvage; pyridoxal 5'-phosphate from pyridoxal: step 1/1. In terms of biological role, pyridoxal kinase involved in the salvage pathway of pyridoxal 5'-phosphate (PLP). Catalyzes the phosphorylation of pyridoxal to PLP. This Pseudomonas syringae pv. tomato (strain ATCC BAA-871 / DC3000) protein is Pyridoxal kinase PdxY.